Consider the following 283-residue polypeptide: Non-selective voltage-gated ion channel VDAC1 (283 aa).

The residue at position 2 (A2) is an N-acetylalanine. K12 provides a ligand contact to ATP. K12 participates in a covalent cross-link: Glycyl lysine isopeptide (Lys-Gly) (interchain with G-Cter in ubiquitin). At S13 the chain carries Phosphoserine. T19 bears the Phosphothreonine mark. K20 contributes to the ATP binding site. Residue K20 is modified to N6-acetyllysine; alternate. K20 bears the N6-succinyllysine; alternate mark. K20 participates in a covalent cross-link: Glycyl lysine isopeptide (Lys-Gly) (interchain with G-Cter in ubiquitin); alternate. 2 beta stranded membrane passes run 26 to 35 and 39 to 47; these read LIKLDLKTKS and LEFTSSGSA. Glycyl lysine isopeptide (Lys-Gly) (interchain with G-Cter in ubiquitin) cross-links involve residues K53 and K61. The beta stranded transmembrane segment at 54–64 threads the bilayer; sequence VNGSLETKYRW. Residue Y67 is modified to Phosphotyrosine. Beta stranded transmembrane passes span 69 to 76, 80 to 89, and 95 to 104; these read LTFTEKWN, TLGTEITVED, and LKLTFDSSFS. T107 bears the Phosphothreonine mark. An N6-acetyllysine; alternate modification is found at K109. K109 participates in a covalent cross-link: Glycyl lysine isopeptide (Lys-Gly) (interchain with G-Cter in ubiquitin); alternate. K110 participates in a covalent cross-link: Glycyl lysine isopeptide (Lys-Gly) (interchain with G-Cter in ubiquitin). 4 beta stranded membrane passes run 111–120, 123–130, 137–145, and 150–158; these read NAKIKTGYKR, INLGCDVD, SIRGALVLG, and LAGYQMNFE. S137 carries the post-translational modification Phosphoserine. Residue K161 forms a Glycyl lysine isopeptide (Lys-Gly) (interchain with G-Cter in ubiquitin) linkage. Transmembrane regions (beta stranded) follow at residues 163–175, 178–185, 189–198, 202–211, 218–227, and 231–238; these read RVTQSNFAVGYKT, FQLHTNVN, EFGGSIYQKV, LETAVNLAWT, RFGIAAKYQV, and ACFSAKVN. S193 bears the Phosphoserine; by NEK1 mark. Phosphoserine is present on S240. 242–244 is a binding site for NAD(+); sequence LIG. The beta stranded transmembrane segment at 242–251 threads the bilayer; the sequence is LIGLGYTQTL. The residue at position 252 (K252) is an N6-acetyllysine. Residues 254 to 263 form a beta stranded membrane-spanning segment; the sequence is GIKLTLSALL. 260 to 264 is an NAD(+) binding site; that stretch reads SALLD. At K266 the chain carries N6-acetyllysine; alternate. K266 participates in a covalent cross-link: Glycyl lysine isopeptide (Lys-Gly) (interchain with G-Cter in ubiquitin); alternate. Residues 273 to 282 form a beta stranded membrane-spanning segment; that stretch reads HKLGLGLEFQ. K274 is covalently cross-linked (Glycyl lysine isopeptide (Lys-Gly) (interchain with G-Cter in ubiquitin)).

The protein belongs to the eukaryotic mitochondrial porin family. In terms of assembly, homodimer and homotrimer; in response to cyclic AMP or calcium; oligomerization is required for scramblase activity. Component of the mitochondrial permeability transition pore complex (mPTPC), at least composed of SPG7, VDAC1 and PPIF. Interacts with SPG7, NIPSNAP2 and SLC25A30. Interacts with hexokinases including HK1. The HK1-VDAC1 complex interacts with ATF2. Interacts with BCL2L1. Interacts with BAK1. Interacts with RTL10/BOP (via BH3 domain). Interacts with amyloid-beta and APP; induces VDAC1 dephosphorylation. Interacts with TMEM41B. Interacts with BCAP31. Interacts with HSPA9; this interaction couples ITPR1 to VDAC1. In terms of processing, phosphorylation at Ser-193 by NEK1 promotes the closed conformational state preventing excessive mitochondrial membrane permeability and subsequent apoptotic cell death after injury. Phosphorylation by the AKT-GSK3B axis stabilizes the protein probably by preventing ubiquitin-mediated proteasomal degradation. Ubiquitinated. Undergoes monoubiquitination and polyubiquitination by PRKN; monoubiquitination at Lys-274 inhibits apoptosis, whereas polyubiquitination leads to its degradation and promotes mitophagy. Deubiquitinated by USP30. In terms of tissue distribution, widely expressed. High levels in heart and kidney with lower levels in brain and ascitic tumor. Very low levels in liver.

It localises to the mitochondrion outer membrane. It is found in the cell membrane. The protein resides in the membrane raft. It carries out the reaction Ca(2+)(in) = Ca(2+)(out). The enzyme catalyses Na(+)(in) = Na(+)(out). It catalyses the reaction chloride(in) = chloride(out). The catalysed reaction is Mg(2+)(in) = Mg(2+)(out). It carries out the reaction K(+)(in) = K(+)(out). The enzyme catalyses ATP(in) = ATP(out). It catalyses the reaction L-glutamate(out) = L-glutamate(in). The catalysed reaction is dopamine(out) = dopamine(in). It carries out the reaction acetylcholine(in) = acetylcholine(out). The enzyme catalyses Fe(III)-[cytochrome c](out) = Fe(III)-[cytochrome c](in). It catalyses the reaction a 1,2-diacyl-sn-glycero-3-phosphocholine(in) = a 1,2-diacyl-sn-glycero-3-phosphocholine(out). The catalysed reaction is a 1,2-diacyl-sn-glycero-3-phospho-L-serine(in) = a 1,2-diacyl-sn-glycero-3-phospho-L-serine(out). With respect to regulation, inhibited by nitric oxide. Voltage-gated ion channel activity is inhibited by lanthanum(3+) and ruthenium red. Mitochondrial calcium transport is inhibited by lanthanum(3+), ruthenium red and Ru360. In terms of biological role, non-selective voltage-gated ion channel that mediates the transport of anions and cations through the mitochondrion outer membrane and plasma membrane. The channel at the outer mitochondrial membrane allows diffusion of small hydrophilic molecules; in the plasma membrane it is involved in cell volume regulation and apoptosis. It adopts an open conformation at low or zero membrane potential and a closed conformation at potentials above 30-40 mV. The open state has a weak anion selectivity whereas the closed state is cation-selective. Binds various signaling molecules, including the sphingolipid ceramide, the phospholipid phosphatidylcholine, and the sterols cholesterol and oxysterol. In depolarized mitochondria, acts downstream of PRKN and PINK1 to promote mitophagy or prevent apoptosis; polyubiquitination by PRKN promotes mitophagy, while monoubiquitination by PRKN decreases mitochondrial calcium influx which ultimately inhibits apoptosis. May participate in the formation of the permeability transition pore complex (PTPC) responsible for the release of mitochondrial products that triggers apoptosis. May mediate ATP export from cells. Part of a complex composed of HSPA9, ITPR1 and VDAC1 that regulates mitochondrial calcium-dependent apoptosis by facilitating calcium transport from the ER lumen to the mitochondria intermembrane space thus providing calcium for the downstream calcium channel MCU that directly releases it into mitochondria matrix. Functionally, catalyzes the scrambling of phospholipids across the outer mitochondrial membrane; the mechanism is unrelated to channel activity and is capable of translocating both anionic and zwitterionic phospholipids. The protein is Non-selective voltage-gated ion channel VDAC1 of Rattus norvegicus (Rat).